A 297-amino-acid polypeptide reads, in one-letter code: Carbamate kinase (297 aa).

Belongs to the carbamate kinase family.

Its subcellular location is the cytoplasm. The catalysed reaction is hydrogencarbonate + NH4(+) + ATP = carbamoyl phosphate + ADP + H2O + H(+). It catalyses the reaction carbamate + ATP = carbamoyl phosphate + ADP. The enzyme catalyses hydrogencarbonate + NH4(+) = carbamate + H2O + H(+). It functions in the pathway nitrogen metabolism; (S)-allantoin degradation. In terms of biological role, kinase involved in the anaerobic nitrogen utilization via the assimilation of allantoin. Catalyzes the transfer of a phosphate group from carbamoyl phosphate to ADP to produce ATP and leave carbamate, which spontaneously hydrolyzes to ammonia and hydrogencarbonate. The protein is Carbamate kinase of Escherichia coli O6:H1 (strain CFT073 / ATCC 700928 / UPEC).